Here is a 1472-residue protein sequence, read N- to C-terminus: ABC transporter FGM5 (1472 aa).

11 helical membrane-spanning segments follow: residues 32–52 (IILG…RVAT), 67–87 (FTKL…LILS), 100–120 (FAVA…ALSF), 163–183 (YAGV…LELQ), 197–217 (SPEE…IGIF), 271–291 (ALIV…GFQY), 316–336 (GLIG…ALFW), 386–406 (FHGL…CFLL), 412–432 (LAFI…TAIA), 493–513 (LLIM…VVAF), and 534–554 (LLTN…AAFV). An ABC transmembrane type-1 1 domain is found at 284–551 (IAMIGFQYAQ…MFQSVPAVIA (268 aa)). Residues 605–834 (ISIVDGSFGW…GIYIPTLGLS (230 aa)) form the ABC transporter 1 domain. 638 to 645 (GPVASGKS) is a binding site for ATP. 5 N-linked (GlcNAc...) asparagine glycosylation sites follow: N682, N696, N763, N784, and N843. A run of 4 helical transmembrane segments spans residues 900 to 920 (LLSG…MGWW), 938 to 958 (LFRG…VIFM), 1003 to 1023 (GELP…FAMA), and 1024 to 1044 (VVVA…FSII). The region spanning 900-1139 (LLSGIMYAVG…VGVVAISTQL (240 aa)) is the ABC transmembrane type-1 2 domain. N1101 is a glycosylation site (N-linked (GlcNAc...) asparagine). The helical transmembrane segment at 1116–1136 (FLATFLNLIVMVLAVGVVAIS) threads the bilayer. An ABC transporter 2 domain is found at 1218–1468 (YKNDDESPAS…EGSWFSQLWA (251 aa)). Residue 1255-1262 (GRTGSGKS) coordinates ATP. N-linked (GlcNAc...) asparagine glycosylation is found at N1277 and N1293.

It belongs to the ABC transporter superfamily. ABCC family. Conjugate transporter (TC 3.A.1.208) subfamily.

The protein resides in the cell membrane. It participates in secondary metabolite biosynthesis. Functionally, ABC transporter; part of the Fg3_54/C64 gene cluster that mediates the biosynthesis of the octapeptide fusaoctaxin A, a virulence factor that is required for cell-to-cell invasiveness of plant host. The 2 nonribosomal peptide synthetases NRPS9 and NRPS5 form an assembly line which likely utilizes GABA as a starter unit (loaded on the unique module M1 of NRPS9) and sequentially incorporates seven extender units composed of the residues L-Ala, L-allo-Ile, L-Ser, L-Val, L-Ser, L-Leu and L-Leu, respectively. During the process, each of the residues that are tethered on modules M3-M7 of NRPS5 containing an E domain can undergo an epimerization reaction to produce a D-configuration before the transpeptidation reaction occurs. The elongation of the peptidyl chain might be terminated by module M8-mediated L-Leu incorporation, followed by R domain-catalyzed 4 electron reduction to release the resulting octapeptide from the assembly line as an alcohol. Fusaoctaxin A is cleaved by the cluster specific ABC transporter FGM5 to the pentapeptide fusapentaxin A and the tripeptide fusatrixin A. The other enzymes from the cluster, FGM1, FGM2, FGM3 and FGM9 seem not to be involved in the biosynthesis of fusaoctaxin A and their functions have still to be determined. This Gibberella zeae (strain ATCC MYA-4620 / CBS 123657 / FGSC 9075 / NRRL 31084 / PH-1) (Wheat head blight fungus) protein is ABC transporter FGM5.